We begin with the raw amino-acid sequence, 524 residues long: MQTTANHSSRSTQTGTRAHGAALAETTSREDFRALATEHRVVPVIRKVLADSETPLSAYRKLAANRPGTFLLESAENGRSWSRWSFIGAGAPSALTVRDNAAAWLGTAPEGAPSGGDPLDALRATLDLLKTEAMAGLPPLSSGLVGFFAYDMVRRLERLPELAVDDLGLPDMLLLLATDIAAVDHHEGTITLIANAVNWNGTDERVDWAYDDAVARLDVMTKALGQPLTSAVATFSRPAPDHRAQRTMEEYTEIVDKLVGDIEAGEAFQVVPSQRFEMDTAADPLDVYRILRVTNPSPYMYLLNIPDADGGLDFSIVGSSPEALVTVKDGRATTHPIAGTRWRGATEEEDVLLEKELLADEKERAEHLMLVDLGRNDLGRVCRPGTVRVDDYSHIERYSHVMHLVSTVTGELAEDKTALDAVTACFPAGTLSGAPKVRAMELIEEVEKTRRGLYGGVVGYLDFAGNADFAIAIRTALMRNGTAYVQAGGGVVADSNGPYEYTEAANKARAVLNAIAAAATLAEP.

Positions 1 to 16 are enriched in polar residues; that stretch reads MQTTANHSSRSTQTGT. Positions 1–25 are disordered; the sequence is MQTTANHSSRSTQTGTRAHGAALAE. Residues S74 and 298-300 each bind L-tryptophan; that span reads PYM. 339-340 contacts chorismate; the sequence is GT. An Isoglutamyl lysine isopeptide (Lys-Gln) (interchain with Q-Cter in protein Pup) cross-link involves residue K355. E366 is a binding site for Mg(2+). Residues Y454, R474, 488–490, and G490 each bind chorismate; that span reads GGG. E503 is a Mg(2+) binding site.

It belongs to the anthranilate synthase component I family. In terms of assembly, heterotetramer consisting of two non-identical subunits: a beta subunit (TrpG) and a large alpha subunit (TrpE). The cofactor is Mg(2+).

It catalyses the reaction chorismate + L-glutamine = anthranilate + pyruvate + L-glutamate + H(+). The protein operates within amino-acid biosynthesis; L-tryptophan biosynthesis; L-tryptophan from chorismate: step 1/5. Its activity is regulated as follows. Feedback inhibited by tryptophan. In terms of biological role, part of a heterotetrameric complex that catalyzes the two-step biosynthesis of anthranilate, an intermediate in the biosynthesis of L-tryptophan. In the first step, the glutamine-binding beta subunit (TrpG) of anthranilate synthase (AS) provides the glutamine amidotransferase activity which generates ammonia as a substrate that, along with chorismate, is used in the second step, catalyzed by the large alpha subunit of AS (TrpE) to produce anthranilate. In the absence of TrpG, TrpE can synthesize anthranilate directly from chorismate and high concentrations of ammonia. This is Anthranilate synthase component 1 (trpE) from Mycolicibacterium smegmatis (strain ATCC 700084 / mc(2)155) (Mycobacterium smegmatis).